The primary structure comprises 227 residues: MICOS complex subunit MIC19 (227 aa).

G2 is lipidated: N-myristoyl glycine. At S29 the chain carries Phosphoserine. Positions 34–60 (DRMKETSPSGPKSQRYSGTYGASVSDE) are disordered. Positions 39–55 (TSPSGPKSQRYSGTYGA) are enriched in polar residues. The residue at position 49 (Y49) is a Phosphotyrosine. Residues S50, S56, and S58 each carry the phosphoserine modification. K142 carries the post-translational modification N6-acetyllysine. The region spanning 180 to 222 (HPVCADLQAQILQCYRQNTQQTLSCSALASQYMRCVNQAKQST) is the CHCH domain. 2 consecutive short sequence motifs (cx9C motif) follow at residues 183–193 (CADLQAQILQC) and 204–214 (CSALASQYMRC). Disulfide bonds link C183–C214 and C193–C204.

It belongs to the MICOS complex subunit Mic19 family. Metazoan Mic19 subfamily. As to quaternary structure, component of the mitochondrial contact site and cristae organizing system (MICOS) complex, composed of at least MICOS10/MIC10, CHCHD3/MIC19, CHCHD6/MIC25, APOOL/MIC27, IMMT/MIC60, APOO/MIC23/MIC26 and MICOS13/MIC13. This complex was also known under the names MINOS or MitOS complex. The MICOS complex associates with mitochondrial outer membrane proteins SAMM50, MTX1 and MTX2 (together described as components of the mitochondrial outer membrane sorting assembly machinery (SAM) complex) and DNAJC11, mitochondrial inner membrane protein TMEM11 and with HSPA9. The MICOS and SAM complexes together with DNAJC11 are part of a large protein complex spanning both membranes termed the mitochondrial intermembrane space bridging (MIB) complex. Interacts with HSPA1A/HSPA1B and OPA1, preferentially with the soluble OPA1 form. Interacts with IMMT/MIC60.

The protein resides in the mitochondrion inner membrane. It localises to the cytoplasm. Its subcellular location is the nucleus. It is found in the mitochondrion. Component of the MICOS complex, a large protein complex of the mitochondrial inner membrane that plays crucial roles in the maintenance of crista junctions, inner membrane architecture, and formation of contact sites to the outer membrane. Has also been shown to function as a transcription factor which binds to the BAG1 promoter and represses BAG1 transcription. Plays an important role in the maintenance of the MICOS complex stability and the mitochondrial cristae morphology. This is MICOS complex subunit MIC19 (CHCHD3) from Bos taurus (Bovine).